Here is a 330-residue protein sequence, read N- to C-terminus: Methylthioribose-1-phosphate isomerase (330 aa).

Substrate is bound by residues 49 to 51, R83, and Q179; that span reads RGA. The active-site Proton donor is D220. 230–231 provides a ligand contact to substrate; that stretch reads NK.

It belongs to the eIF-2B alpha/beta/delta subunits family. MtnA subfamily.

The enzyme catalyses 5-(methylsulfanyl)-alpha-D-ribose 1-phosphate = 5-(methylsulfanyl)-D-ribulose 1-phosphate. Its pathway is amino-acid biosynthesis; L-methionine biosynthesis via salvage pathway; L-methionine from S-methyl-5-thio-alpha-D-ribose 1-phosphate: step 1/6. Functionally, catalyzes the interconversion of methylthioribose-1-phosphate (MTR-1-P) into methylthioribulose-1-phosphate (MTRu-1-P). The chain is Methylthioribose-1-phosphate isomerase from Thermus thermophilus (strain ATCC BAA-163 / DSM 7039 / HB27).